Here is a 160-residue protein sequence, read N- to C-terminus: Transcription antitermination protein NusB (160 aa).

This sequence belongs to the NusB family.

In terms of biological role, involved in transcription antitermination. Required for transcription of ribosomal RNA (rRNA) genes. Binds specifically to the boxA antiterminator sequence of the ribosomal RNA (rrn) operons. In Allorhizobium ampelinum (strain ATCC BAA-846 / DSM 112012 / S4) (Agrobacterium vitis (strain S4)), this protein is Transcription antitermination protein NusB.